Here is a 221-residue protein sequence, read N- to C-terminus: Pleckstrin homology domain-containing family B member 2 (221 aa).

In terms of domain architecture, PH spans A2 to T109. Residue K20 coordinates a 1,2-diacyl-sn-glycero-3-phospho-L-serine.

In terms of tissue distribution, highly expressed in brain, retina, heart and kidney. Detected at lower levels in lung, muscle and nerve.

Its subcellular location is the recycling endosome membrane. In terms of biological role, involved in retrograde transport of recycling endosomes. The sequence is that of Pleckstrin homology domain-containing family B member 2 (Plekhb2) from Mus musculus (Mouse).